The primary structure comprises 1415 residues: DNA-directed RNA polymerase subunit beta' (1415 aa).

The Zn(2+) site is built by cysteine 71, cysteine 73, cysteine 86, and cysteine 89. 3 residues coordinate Mg(2+): aspartate 461, aspartate 463, and aspartate 465. Residues cysteine 815, cysteine 889, cysteine 896, and cysteine 899 each contribute to the Zn(2+) site.

It belongs to the RNA polymerase beta' chain family. As to quaternary structure, the RNAP catalytic core consists of 2 alpha, 1 beta, 1 beta' and 1 omega subunit. When a sigma factor is associated with the core the holoenzyme is formed, which can initiate transcription. It depends on Mg(2+) as a cofactor. Requires Zn(2+) as cofactor.

It carries out the reaction RNA(n) + a ribonucleoside 5'-triphosphate = RNA(n+1) + diphosphate. Functionally, DNA-dependent RNA polymerase catalyzes the transcription of DNA into RNA using the four ribonucleoside triphosphates as substrates. This Haemophilus influenzae (strain ATCC 51907 / DSM 11121 / KW20 / Rd) protein is DNA-directed RNA polymerase subunit beta'.